Consider the following 100-residue polypeptide: Putative pterin-4-alpha-carbinolamine dehydratase (100 aa).

The protein belongs to the pterin-4-alpha-carbinolamine dehydratase family.

It carries out the reaction (4aS,6R)-4a-hydroxy-L-erythro-5,6,7,8-tetrahydrobiopterin = (6R)-L-erythro-6,7-dihydrobiopterin + H2O. The polypeptide is Putative pterin-4-alpha-carbinolamine dehydratase (Rhodopseudomonas palustris (strain TIE-1)).